We begin with the raw amino-acid sequence, 345 residues long: tRNA-dihydrouridine(20/20a) synthase (345 aa).

FMN contacts are provided by residues 32 to 34 (PML) and glutamine 84. Cysteine 114 acts as the Proton donor in catalysis. FMN-binding positions include lysine 153, histidine 186, 226–228 (NGG), and 248–249 (GR).

Belongs to the Dus family. DusA subfamily. Requires FMN as cofactor.

The enzyme catalyses 5,6-dihydrouridine(20) in tRNA + NADP(+) = uridine(20) in tRNA + NADPH + H(+). The catalysed reaction is 5,6-dihydrouridine(20) in tRNA + NAD(+) = uridine(20) in tRNA + NADH + H(+). It catalyses the reaction 5,6-dihydrouridine(20a) in tRNA + NADP(+) = uridine(20a) in tRNA + NADPH + H(+). It carries out the reaction 5,6-dihydrouridine(20a) in tRNA + NAD(+) = uridine(20a) in tRNA + NADH + H(+). Its function is as follows. Catalyzes the synthesis of 5,6-dihydrouridine (D), a modified base found in the D-loop of most tRNAs, via the reduction of the C5-C6 double bond in target uridines. Specifically modifies U20 and U20a in tRNAs. This is tRNA-dihydrouridine(20/20a) synthase from Escherichia coli O157:H7.